A 131-amino-acid polypeptide reads, in one-letter code: Protein anoxia up-regulated (131 aa).

Residues 1-24 (MVYESGFTTRRTYSSRPVTTSYAV) show a composition bias toward polar residues. A disordered region spans residues 1–121 (MVYESGFTTR…STTSGNLPGG (121 aa)). Low complexity-rich tracts occupy residues 44–53 (SSDYSYTSKS) and 98–116 (TSTTGAGPGGYSYSSTTSG).

In terms of tissue distribution, concentrated in lamina neurons, first optic lobe neurons and cortical neurons of central brain.

In terms of biological role, plays an important role in the regulation of tissue responsiveness to oxygen deprivation. In Drosophila melanogaster (Fruit fly), this protein is Protein anoxia up-regulated.